We begin with the raw amino-acid sequence, 171 residues long: MRAIFLILCSVLLNGCLGMPESVKPVSDFELNNYLGKWYEVARLDHSFERGLSQVTAEYRVRNDGGISVLNRGYSEEKGEWKEAEGKAYFVNGSTDGYLKVSFFGPFYGSYVVFELDRENYSYAFVSGPNTEYLWLLSRTPTVERGILDKFIEMSKERGFDTNRLIYVQQQ.

An N-terminal signal peptide occupies residues 1 to 15; it reads MRAIFLILCSVLLNG. Cysteine 16 carries N-palmitoyl cysteine lipidation. Cysteine 16 is lipidated: S-diacylglycerol cysteine.

This sequence belongs to the calycin superfamily. Lipocalin family. In terms of assembly, homodimer.

The protein resides in the cell outer membrane. Involved in the storage or transport of lipids necessary for membrane maintenance under stressful conditions. Displays a binding preference for lysophospholipids. The polypeptide is Outer membrane lipoprotein Blc (blc) (Vibrio cholerae serotype O1 (strain ATCC 39315 / El Tor Inaba N16961)).